We begin with the raw amino-acid sequence, 241 residues long: Tetrahydromethanopterin S-methyltransferase subunit A (241 aa).

Residues 1 to 220 (MAEKKEPAEG…HSGVLAGKIE (220 aa)) are Cytoplasmic-facing. His85 contacts 5-hydroxybenzimidazolylcob(I)amide. The chain crosses the membrane as a helical span at residues 221-241 (GIMVGLVLSLFVLGLLLFGGM).

Belongs to the MtrA family. In terms of assembly, the complex is composed of 8 subunits; MtrA, MtrB, MtrC, MtrD, MtrE, MtrF, MtrG and MtrH. 5-hydroxybenzimidazolylcob(I)amide serves as cofactor.

It is found in the cell membrane. The enzyme catalyses 5-methyl-5,6,7,8-tetrahydromethanopterin + coenzyme M + 2 Na(+)(in) = 5,6,7,8-tetrahydromethanopterin + methyl-coenzyme M + 2 Na(+)(out). The protein operates within one-carbon metabolism; methanogenesis from CO(2); methyl-coenzyme M from 5,10-methylene-5,6,7,8-tetrahydromethanopterin: step 2/2. Functionally, part of a complex that catalyzes the formation of methyl-coenzyme M and tetrahydromethanopterin from coenzyme M and methyl-tetrahydromethanopterin. This is an energy-conserving, sodium-ion translocating step. This is Tetrahydromethanopterin S-methyltransferase subunit A from Methanohalobium evestigatum (strain ATCC BAA-1072 / DSM 3721 / NBRC 107634 / OCM 161 / Z-7303).